Here is an 866-residue protein sequence, read N- to C-terminus: DNA topoisomerase 3-beta (866 aa).

Positions 4 to 149 (TVLMVAEKPS…RIFRAKFSSV (146 aa)) constitute a Toprim domain. Mg(2+)-binding residues include glutamate 10, aspartate 114, and aspartate 116. The Topo IA-type catalytic domain maps to 165–585 (SKDEALAVDA…HVLQQFMKKY (421 aa)). An interaction with DNA region spans residues 207 to 212 (SYGPCQ). Catalysis depends on tyrosine 329, which acts as the O-(5'-phospho-DNA)-tyrosine intermediate. Positions 830 to 853 (MRRGRGRGRGRGRGRGSSRGRRGS) are enriched in basic residues. The segment at 830 to 866 (MRRGRGRGRGRGRGRGSSRGRRGSSRHDDPKMSFRDF) is disordered. Positions 854–866 (SRHDDPKMSFRDF) are enriched in basic and acidic residues.

It belongs to the type IA topoisomerase family. It depends on Mg(2+) as a cofactor.

The catalysed reaction is ATP-independent breakage of single-stranded DNA, followed by passage and rejoining.. Functionally, releases the supercoiling and torsional tension of DNA introduced during the DNA replication and transcription by transiently cleaving and rejoining one strand of the DNA duplex. Introduces a single-strand break via transesterification at a target site in duplex DNA. The scissile phosphodiester is attacked by the catalytic tyrosine of the enzyme, resulting in the formation of a DNA-(5'-phosphotyrosyl)-enzyme intermediate and the expulsion of a 3'-OH DNA strand. The free DNA strand than undergoes passage around the unbroken strand thus removing DNA supercoils. Finally, in the religation step, the DNA 3'-OH attacks the covalent intermediate to expel the active-site tyrosine and restore the DNA phosphodiester backbone. In Oryza sativa subsp. japonica (Rice), this protein is DNA topoisomerase 3-beta (TOP3B).